A 598-amino-acid polypeptide reads, in one-letter code: Elongation factor 4 (598 aa).

In terms of domain architecture, tr-type G spans 2–184 (NRIRNFSIIA…TIVAKLPPPK (183 aa)). Residues 14–19 (DHGKST) and 131–134 (NKID) each bind GTP.

This sequence belongs to the TRAFAC class translation factor GTPase superfamily. Classic translation factor GTPase family. LepA subfamily.

The protein localises to the cell inner membrane. It catalyses the reaction GTP + H2O = GDP + phosphate + H(+). Required for accurate and efficient protein synthesis under certain stress conditions. May act as a fidelity factor of the translation reaction, by catalyzing a one-codon backward translocation of tRNAs on improperly translocated ribosomes. Back-translocation proceeds from a post-translocation (POST) complex to a pre-translocation (PRE) complex, thus giving elongation factor G a second chance to translocate the tRNAs correctly. Binds to ribosomes in a GTP-dependent manner. The chain is Elongation factor 4 from Desulfosudis oleivorans (strain DSM 6200 / JCM 39069 / Hxd3) (Desulfococcus oleovorans).